The primary structure comprises 555 residues: Formate--tetrahydrofolate ligase (555 aa).

Residue Thr-63–Thr-70 participates in ATP binding.

The protein belongs to the formate--tetrahydrofolate ligase family.

It catalyses the reaction (6S)-5,6,7,8-tetrahydrofolate + formate + ATP = (6R)-10-formyltetrahydrofolate + ADP + phosphate. The protein operates within one-carbon metabolism; tetrahydrofolate interconversion. This Beijerinckia indica subsp. indica (strain ATCC 9039 / DSM 1715 / NCIMB 8712) protein is Formate--tetrahydrofolate ligase.